A 460-amino-acid polypeptide reads, in one-letter code: Argininosuccinate lyase (460 aa).

This sequence belongs to the lyase 1 family. Argininosuccinate lyase subfamily.

The protein resides in the cytoplasm. The enzyme catalyses 2-(N(omega)-L-arginino)succinate = fumarate + L-arginine. It participates in amino-acid biosynthesis; L-arginine biosynthesis; L-arginine from L-ornithine and carbamoyl phosphate: step 3/3. In Prosthecochloris aestuarii (strain DSM 271 / SK 413), this protein is Argininosuccinate lyase.